The primary structure comprises 258 residues: Imidazole glycerol phosphate synthase subunit HisF (258 aa).

Catalysis depends on residues aspartate 11 and aspartate 130.

Belongs to the HisA/HisF family. Heterodimer of HisH and HisF.

The protein localises to the cytoplasm. It catalyses the reaction 5-[(5-phospho-1-deoxy-D-ribulos-1-ylimino)methylamino]-1-(5-phospho-beta-D-ribosyl)imidazole-4-carboxamide + L-glutamine = D-erythro-1-(imidazol-4-yl)glycerol 3-phosphate + 5-amino-1-(5-phospho-beta-D-ribosyl)imidazole-4-carboxamide + L-glutamate + H(+). The protein operates within amino-acid biosynthesis; L-histidine biosynthesis; L-histidine from 5-phospho-alpha-D-ribose 1-diphosphate: step 5/9. Functionally, IGPS catalyzes the conversion of PRFAR and glutamine to IGP, AICAR and glutamate. The HisF subunit catalyzes the cyclization activity that produces IGP and AICAR from PRFAR using the ammonia provided by the HisH subunit. The sequence is that of Imidazole glycerol phosphate synthase subunit HisF from Edwardsiella ictaluri (strain 93-146).